Consider the following 846-residue polypeptide: DNA mismatch repair protein MutS (846 aa).

Residue 610-617 coordinates ATP; it reads GPNMGGKS.

The protein belongs to the DNA mismatch repair MutS family.

In terms of biological role, this protein is involved in the repair of mismatches in DNA. It is possible that it carries out the mismatch recognition step. This protein has a weak ATPase activity. In Legionella pneumophila (strain Lens), this protein is DNA mismatch repair protein MutS.